The sequence spans 212 residues: ATP-dependent dethiobiotin synthetase BioD (212 aa).

ATP is bound at residue 13–18 (GIGKTV). Threonine 17 serves as a coordination point for Mg(2+). Lysine 33 is an active-site residue. Serine 37 serves as a coordination point for substrate. Glutamate 100 lines the Mg(2+) pocket. ATP-binding positions include 100–103 (EGAG), 160–161 (IS), and 184–186 (PLL).

Belongs to the dethiobiotin synthetase family. In terms of assembly, homodimer. Mg(2+) serves as cofactor.

The protein localises to the cytoplasm. The catalysed reaction is (7R,8S)-7,8-diammoniononanoate + CO2 + ATP = (4R,5S)-dethiobiotin + ADP + phosphate + 3 H(+). The protein operates within cofactor biosynthesis; biotin biosynthesis; biotin from 7,8-diaminononanoate: step 1/2. Its function is as follows. Catalyzes a mechanistically unusual reaction, the ATP-dependent insertion of CO2 between the N7 and N8 nitrogen atoms of 7,8-diaminopelargonic acid (DAPA, also called 7,8-diammoniononanoate) to form a ureido ring. This Brucella abortus (strain S19) protein is ATP-dependent dethiobiotin synthetase BioD.